We begin with the raw amino-acid sequence, 234 residues long: Ankyrin repeat-containing protein C6C3.08 (234 aa).

5 ANK repeats span residues 36-66, 70-100, 106-135, 140-169, and 173-203; these read DKRTPLHWACSVGKVNTIYFLLKQPNIKPDE, AGWTPLMISINNRSVPDNVIEELINRSDVDP, GGQTCLHYAAGKGRLSIVQLLCDKAPELIR, QGQTPLHRAAAVGKIQVVKYLISQRAPLNT, and YGFTPLHFALAEGHPDVGVELVRAGADTLRK.

The sequence is that of Ankyrin repeat-containing protein C6C3.08 from Schizosaccharomyces pombe (strain 972 / ATCC 24843) (Fission yeast).